We begin with the raw amino-acid sequence, 398 residues long: Proteasome-activating nucleotidase (398 aa).

A coiled-coil region spans residues 3-60 (DSEIQYLLEKLKKLEEDYYKLRELYRRLEDEKKFIESERIRYEREVRRLRSEVERLRS). ATP is bound by residues 185 to 190 (GTGKTL) and His-324. The tract at residues 396–398 (MFV) is docks into pockets in the proteasome alpha-ring to cause gate opening.

This sequence belongs to the AAA ATPase family. In terms of assembly, homohexamer. The hexameric complex has a two-ring architecture resembling a top hat that caps the 20S proteasome core at one or both ends. Upon ATP-binding, the C-terminus of PAN interacts with the alpha-rings of the proteasome core by binding to the intersubunit pockets.

It is found in the cytoplasm. Its function is as follows. ATPase which is responsible for recognizing, binding, unfolding and translocation of substrate proteins into the archaeal 20S proteasome core particle. Is essential for opening the gate of the 20S proteasome via an interaction with its C-terminus, thereby allowing substrate entry and access to the site of proteolysis. Thus, the C-termini of the proteasomal ATPase function like a 'key in a lock' to induce gate opening and therefore regulate proteolysis. Unfolding activity requires energy from ATP hydrolysis, whereas ATP binding alone promotes ATPase-20S proteasome association which triggers gate opening, and supports translocation of unfolded substrates. This chain is Proteasome-activating nucleotidase, found in Archaeoglobus fulgidus (strain ATCC 49558 / DSM 4304 / JCM 9628 / NBRC 100126 / VC-16).